The chain runs to 1196 residues: DNA excision repair protein ERCC-5 homolog (1196 aa).

The segment at 1-78 (MGVQGLWKLL…RIRPIFVFDG (78 aa)) is N-domain. D30 is a binding site for Mg(2+). The tract at residues 31-67 (ISIWLNQAVKGARDRQGNAIQNAHLLTLFHRLCKLLF) is DNA-binding; may bind to the undamaged single-strand DNA of the DNA repair bubble. D77 serves as a coordination point for Mg(2+). The tract at residues 79–818 (EAPLLKRQTL…LQLFGIPYIV (740 aa)) is spacer region. 4 disordered regions span residues 152-176 (PLED…MNQK), 302-321 (KQEE…NSSQ), 629-661 (QTTQ…SSAM), and 722-758 (AVEE…DDVS). Residues 154-168 (EDNENNSSEEEEERE) show a composition bias toward acidic residues. Residues 311-321 (PPQSITFNSSQ) show a composition bias toward polar residues. The segment covering 722–731 (AVEEGNSGSQ) has biased composition (polar residues). Over residues 734 to 755 (PLEHDSGEPHEQSNSEESKDLD) the composition is skewed to basic and acidic residues. Positions 819-914 (APMEAEAQCA…VSAMEILNEF (96 aa)) are I-domain. 4 residues coordinate Mg(2+): E822, E824, D843, and D845. The segment at 853–869 (HVYKNFFSQNKHVEYYQ) is DNA-binding; may bind to the undamaged single-strand DNA of the DNA repair bubble. The segment at 881 to 913 (RSKLINLAYLLGSDYTEGIPTVGYVSAMEILNE) is DNA-binding; H2TH (helix-2turn-helix) motif which binds double-stranded DNA. Mg(2+) is bound at residue D894. Residues 945 to 951 (TKVKKKL) form a DNA-binding; may bind double-stranded DNA region. Positions 1075–1196 (CTNQRKGQKT…KTMKETVKRK (122 aa)) are disordered. The Nuclear localization signal 1 motif lies at 1079–1095 (RKGQKTNTKSQGTKRRK). Low complexity predominate over residues 1119-1130 (SSKAYSSDGSSS). Polar residues predominate over residues 1142 to 1158 (KQSQSGIVGRQKASNKV). The Nuclear localization signal 2 signature appears at 1179-1196 (FQGKKTKSKTMKETVKRK).

This sequence belongs to the XPG/RAD2 endonuclease family. XPG subfamily. In terms of assembly, monomer. Homodimer. Requires Mg(2+) as cofactor.

Its subcellular location is the nucleus. It localises to the chromosome. Its function is as follows. Single-stranded structure-specific DNA endonuclease involved in DNA excision repair. Makes the 3'incision in DNA nucleotide excision repair (NER). Binds and bends DNA repair bubble substrate and breaks base stacking at the single-strand/double-strand DNA junction of the DNA bubble. Plays a role in base excision repair (BER) by promoting the binding of DNA glycosylase to its substrate and increasing DNA glycosylase catalytic activity that removes oxidized pyrimidines from DNA. Involved in transcription-coupled nucleotide excision repair (TCR) which allows RNA polymerase II-blocking lesions to be rapidly removed from the transcribed strand of active genes. Required for DNA replication fork maintenance and preservation of genomic stability. Involved in homologous recombination repair (HRR) induced by DNA replication stress. During HRR, binds to the replication fork with high specificity and stabilizes it. In Xenopus laevis (African clawed frog), this protein is DNA excision repair protein ERCC-5 homolog (ercc5).